A 235-amino-acid polypeptide reads, in one-letter code: Thiamine import ATP-binding protein ThiQ (235 aa).

Positions 2-230 (LKLIDITWLY…QASASALLGI (229 aa)) constitute an ABC transporter domain. An ATP-binding site is contributed by 32–39 (GPSGAGKS).

It belongs to the ABC transporter superfamily. Thiamine importer (TC 3.A.1.19.1) family. The complex is composed of two ATP-binding proteins (ThiQ), two transmembrane proteins (ThiP) and a solute-binding protein (ThiB).

Its subcellular location is the cell inner membrane. It catalyses the reaction thiamine(out) + ATP + H2O = thiamine(in) + ADP + phosphate + H(+). Its function is as follows. Part of the ABC transporter complex ThiBPQ involved in thiamine import. Responsible for energy coupling to the transport system. The protein is Thiamine import ATP-binding protein ThiQ of Salmonella choleraesuis (strain SC-B67).